A 481-amino-acid chain; its full sequence is DNA primase DnaG (481 aa).

The region spanning 169–243 is the Toprim domain; sequence DAILVVEGRA…DVDYVARAPD (75 aa). Positions 175, 217, and 219 each coordinate Mg(2+). Residues 275 to 393 form a disordered region; that stretch reads RRRNKLAAQA…ARKEREPSEF (119 aa). Positions 281-309 are enriched in low complexity; that stretch reads AAQAAEKQAQAEAAQKAEAPAAAAPVQPQ. The segment covering 312-393 has biased composition (basic and acidic residues); it reads YQQKEYPQRE…ARKEREPSEF (82 aa).

It belongs to the archaeal DnaG primase family. Forms a ternary complex with MCM helicase and DNA. Component of the archaeal exosome complex. It depends on Mg(2+) as a cofactor.

The catalysed reaction is ssDNA + n NTP = ssDNA/pppN(pN)n-1 hybrid + (n-1) diphosphate.. Functionally, RNA polymerase that catalyzes the synthesis of short RNA molecules used as primers for DNA polymerase during DNA replication. Also part of the exosome, which is a complex involved in RNA degradation. Acts as a poly(A)-binding protein that enhances the interaction between heteromeric, adenine-rich transcripts and the exosome. This is DNA primase DnaG from Methanocella arvoryzae (strain DSM 22066 / NBRC 105507 / MRE50).